The sequence spans 139 residues: Large-conductance mechanosensitive channel (139 aa).

2 helical membrane-spanning segments follow: residues 9–29 and 79–99; these read AFAVKGNVVDMAVGIIIGAAF and IQTVIDFVIVAFAIFMGVKAI.

Belongs to the MscL family. In terms of assembly, homopentamer.

The protein resides in the cell inner membrane. In terms of biological role, channel that opens in response to stretch forces in the membrane lipid bilayer. May participate in the regulation of osmotic pressure changes within the cell. The chain is Large-conductance mechanosensitive channel from Pseudomonas putida (strain ATCC 47054 / DSM 6125 / CFBP 8728 / NCIMB 11950 / KT2440).